The chain runs to 233 residues: B-cell lymphoma/leukemia 10 (233 aa).

Methionine 1 bears the N-acetylmethionine mark. The CARD domain maps to 13-101; it reads LTEVKKDALE…QNFLIQKITD (89 aa). Glycyl lysine isopeptide (Lys-Gly) (interchain with G-Cter in ubiquitin) cross-links involve residues lysine 17, lysine 31, and lysine 63. Serine 138 is modified (phosphoserine). The interval 187–233 is disordered; it reads FSSTTLPRPGDPGAPPLPPDLQLEEEGTCANSSEMFLPLRSRTVSRQ. Pro residues predominate over residues 195-205; the sequence is PGDPGAPPLPP.

Homomultimer; homooligomerized following recruitment by CARD domain-containing proteins that form a nucleating helical template that recruits BCL10 via CARD-CARD interaction. Self-associates by CARD-CARD interaction and interacts with other CARD-proteins such as CARD9, CARD10, CARD11 and CARD14. Forms a complex with CARD14 and MALT1; resulting in the formation of a CBM (CARD14-BCL10-MALT1) complex. Forms a complex with CARD11 and MALT1; resulting in the formation of a CBM (CARD11-BCL10-MALT1) complex. Forms a complex with CARD9 and MALT1; resulting in the formation of a CBM (CARD9-BCL10-MALT1) complex. Found in a membrane raft complex, at least composed of BCL10, CARD11, DPP4 and IKBKB. Binds caspase-9 with its C-terminal domain. Interacts with TRAF2 and BIRC2/c-IAP2. Interacts with PELI2 and SOCS3; these interactions may be mutually exclusive. Post-translationally, phosphorylated. Phosphorylation results in dissociation from TRAF2 and binding to BIRC2/c-IAP2. Phosphorylated by IKBKB/IKKB. Ubiquitinated via both 'Lys-63'-linked and linear ('Met-1'-linked) polyubiquitin chains in response to T-cell receptor (TCR) activation. Ubiquitination is recognized by IKBKG/NEMO, the regulatory subunit of I-kappa-B kinase (IKK), and is required for TCR-induced NF-kappa-B activation. Linear ubiquitination at Lys-17, Lys-31 and Lys-63 is mediated by RNF31/HOIP; linear ubiquitination is recognized with much higher affinity than 'Lys-63'-linked ubiquitin by IKBKG/NEMO. CARD11 is required for linear ubiquitination by HOIP by promoting the targeting of BCL10 to RNF31/HOIP. In terms of processing, proteolytically cleaved by MALT1; required for T-cell activation. In terms of tissue distribution, ubiquitous.

It is found in the cytoplasm. The protein resides in the perinuclear region. The protein localises to the membrane raft. Its function is as follows. Plays a key role in both adaptive and innate immune signaling by bridging CARD domain-containing proteins to immune activation. Acts by channeling adaptive and innate immune signaling downstream of CARD domain-containing proteins CARD9, CARD11 and CARD14 to activate NF-kappa-B and MAP kinase p38 (MAPK11, MAPK12, MAPK13 and/or MAPK14) pathways which stimulate expression of genes encoding pro-inflammatory cytokines and chemokines. Recruited by activated CARD domain-containing proteins: homooligomerized CARD domain-containing proteins form a nucleating helical template that recruits BCL10 via CARD-CARD interaction, thereby promoting polymerization of BCL10, subsequent recruitment of MALT1 and formation of a CBM complex. This leads to activation of NF-kappa-B and MAP kinase p38 (MAPK11, MAPK12, MAPK13 and/or MAPK14) pathways which stimulate expression of genes encoding pro-inflammatory cytokines and chemokines. Activated by CARD9 downstream of C-type lectin receptors; CARD9-mediated signals are essential for antifungal immunity. Activated by CARD11 downstream of T-cell receptor (TCR) and B-cell receptor (BCR). Promotes apoptosis, pro-caspase-9 maturation and activation of NF-kappa-B via NIK and IKK. This Homo sapiens (Human) protein is B-cell lymphoma/leukemia 10.